The chain runs to 482 residues: Glutamyl-tRNA(Gln) amidotransferase subunit A (482 aa).

Residues K75 and S150 each act as charge relay system in the active site. The Acyl-ester intermediate role is filled by S174.

This sequence belongs to the amidase family. GatA subfamily. As to quaternary structure, heterotrimer of A, B and C subunits.

The enzyme catalyses L-glutamyl-tRNA(Gln) + L-glutamine + ATP + H2O = L-glutaminyl-tRNA(Gln) + L-glutamate + ADP + phosphate + H(+). In terms of biological role, allows the formation of correctly charged Gln-tRNA(Gln) through the transamidation of misacylated Glu-tRNA(Gln) in organisms which lack glutaminyl-tRNA synthetase. The reaction takes place in the presence of glutamine and ATP through an activated gamma-phospho-Glu-tRNA(Gln). This Deinococcus radiodurans (strain ATCC 13939 / DSM 20539 / JCM 16871 / CCUG 27074 / LMG 4051 / NBRC 15346 / NCIMB 9279 / VKM B-1422 / R1) protein is Glutamyl-tRNA(Gln) amidotransferase subunit A.